The chain runs to 611 residues: Chaperone protein DnaK (611 aa).

A Phosphothreonine; by autocatalysis modification is found at Thr-173. Residues 579–592 (AAGQAEGAQGAQDA) show a composition bias toward low complexity. Positions 579–611 (AAGQAEGAQGAQDAGAKKDNVVDAEFEEVKEDK) are disordered. Residues 600–611 (VDAEFEEVKEDK) show a composition bias toward acidic residues.

This sequence belongs to the heat shock protein 70 family.

Acts as a chaperone. The chain is Chaperone protein DnaK from Bacillus mycoides (strain KBAB4) (Bacillus weihenstephanensis).